The sequence spans 503 residues: Anhydrotetracycline monooxygenase (503 aa).

Belongs to the PheA/TfdB FAD monooxygenase family. Requires FAD as cofactor.

It carries out the reaction anhydrotetracycline + NADPH + O2 + H(+) = 5a,11a-dehydrotetracycline + NADP(+) + H2O. It participates in antibiotic biosynthesis; oxytetracycline biosynthesis. In terms of biological role, catalyzes hydroxylation of the anthracycline structure at position C-6 during the biosynthesis of oxytetracyline. In Streptomyces rimosus, this protein is Anhydrotetracycline monooxygenase.